The following is a 443-amino-acid chain: Phosphoglucosamine mutase (443 aa).

S101 serves as the catalytic Phosphoserine intermediate. Mg(2+)-binding residues include S101, D240, D242, and D244. A Phosphoserine modification is found at S101.

It belongs to the phosphohexose mutase family. Mg(2+) serves as cofactor. Post-translationally, activated by phosphorylation.

The catalysed reaction is alpha-D-glucosamine 1-phosphate = D-glucosamine 6-phosphate. Catalyzes the conversion of glucosamine-6-phosphate to glucosamine-1-phosphate. The chain is Phosphoglucosamine mutase from Psychromonas ingrahamii (strain DSM 17664 / CCUG 51855 / 37).